The primary structure comprises 145 residues: Sec-independent protein translocase protein TatB (145 aa).

A helical membrane pass occupies residues 1–21; sequence MLDVGMTELLCFAIIAILVLG.

This sequence belongs to the TatB family. The Tat system comprises two distinct complexes: a TatABC complex, containing multiple copies of TatA, TatB and TatC subunits, and a separate TatA complex, containing only TatA subunits. Substrates initially bind to the TatABC complex, which probably triggers association of the separate TatA complex to form the active translocon.

It is found in the cell inner membrane. Functionally, part of the twin-arginine translocation (Tat) system that transports large folded proteins containing a characteristic twin-arginine motif in their signal peptide across membranes. Together with TatC, TatB is part of a receptor directly interacting with Tat signal peptides. TatB may form an oligomeric binding site that transiently accommodates folded Tat precursor proteins before their translocation. The polypeptide is Sec-independent protein translocase protein TatB (Acinetobacter baumannii (strain ATCC 17978 / DSM 105126 / CIP 53.77 / LMG 1025 / NCDC KC755 / 5377)).